Reading from the N-terminus, the 1001-residue chain is Non-canonical poly(A) RNA polymerase protein Trf4-1 (1001 aa).

Composition is skewed to low complexity over residues 44 to 86 and 127 to 163; these read TING…NNSS and RNST…STNG. Disordered stretches follow at residues 44-92 and 115-238; these read TING…PYLS and QQQQ…AGGA. A compositionally biased stretch (gly residues) spans 164–178; the sequence is PGAGTGTSTGAGGTG. Low complexity predominate over residues 179-216; the sequence is TNSPATTASSTAATTTGPATSMSDTSNNPPQSTTTPAS. 2 residues coordinate Mn(2+): Asp328 and Asp330. Residues 458–517 enclose the PAP-associated domain; sequence NLGVLLLEFFELYGRRFNYMKIGISIKNGGRYMPKDELQRDMVDGHRPSLLCIEDPLTPG. 4 disordered regions span residues 631–652, 687–740, 767–963, and 977–1001; these read PTAH…PGAH, QQQQ…AQEV, ASNS…LRGT, and SSES…RDER. Positions 635 to 649 are enriched in basic residues; that stretch reads GHSHAHSHSHGHAHP. 2 stretches are compositionally biased toward low complexity: residues 687 to 708 and 768 to 788; these read QQQQ…NQSQ and SNSW…TGSS. Gly residues predominate over residues 827 to 841; sequence VGTGSNRGGGDGSGG. The span at 844-854 shows a compositional bias: polar residues; it reads YNQRNNHNSSG. Positions 855–880 are enriched in low complexity; that stretch reads YYHQQYYVPPPMQQQLSKSNSSSNYH. A compositionally biased stretch (basic residues) spans 881–912; that stretch reads QQHHHSHSHGNHSHRQQHHHQQQHHHQQRPQH. 2 stretches are compositionally biased toward low complexity: residues 932–955 and 977–992; these read SAGN…SNNS and SSES…SSRS.

It belongs to the DNA polymerase type-B-like family. Requires Mn(2+) as cofactor.

Its subcellular location is the cytoplasm. It catalyses the reaction RNA(n) + ATP = RNA(n)-3'-adenine ribonucleotide + diphosphate. Its function is as follows. Involved in a post-transcriptional quality control mechanism limiting inappropriate expression of genetic information. Polyadenylation is required for the degradative activity of the exosome on several of its nuclear RNA substrates. Polyadenylates RNA processing and degradation intermediates of snRNAs and mRNAs. The sequence is that of Non-canonical poly(A) RNA polymerase protein Trf4-1 from Drosophila melanogaster (Fruit fly).